The chain runs to 245 residues: Orotidine 5'-phosphate decarboxylase (245 aa).

Residues aspartate 22, lysine 44, 71 to 80 (DLKFHDIPNT), threonine 131, arginine 192, glutamine 201, glycine 221, and arginine 222 each bind substrate. Lysine 73 acts as the Proton donor in catalysis.

The protein belongs to the OMP decarboxylase family. Type 1 subfamily. In terms of assembly, homodimer.

The enzyme catalyses orotidine 5'-phosphate + H(+) = UMP + CO2. The protein operates within pyrimidine metabolism; UMP biosynthesis via de novo pathway; UMP from orotate: step 2/2. Its function is as follows. Catalyzes the decarboxylation of orotidine 5'-monophosphate (OMP) to uridine 5'-monophosphate (UMP). This Yersinia pestis bv. Antiqua (strain Antiqua) protein is Orotidine 5'-phosphate decarboxylase.